The following is a 61-amino-acid chain: Rubredoxin 3 (61 aa).

A Rubredoxin-like domain is found at 1–53 (MSSYRCPVCEYVYDESKGAPREGFPAGTPWDAVPDDWCCPDCGVREKLDFEPM). Fe cation-binding residues include Cys6, Cys9, Cys39, and Cys42.

It belongs to the rubredoxin family. It depends on Fe(3+) as a cofactor.

In terms of biological role, involved in the hydrocarbon hydroxylating system, which transfers electrons from NADH to rubredoxin reductase and then through rubredoxin to alkane 1 monooxygenase. The protein is Rubredoxin 3 (rubA3) of Rhodococcus erythropolis (Arthrobacter picolinophilus).